Reading from the N-terminus, the 307-residue chain is Protoheme IX farnesyltransferase (307 aa).

8 consecutive transmembrane segments (helical) span residues 32 to 52 (MGIVNSNTLTVFTGFWLALHF), 65 to 85 (FFTIVGSALIMAGVCCLNNYI), 108 to 128 (PGFALAFGLVILLLGFVFLLL), 131 to 151 (PMAVLISFIGAFTYVVLYTLW), 158 to 178 (LNTVVGSISGAVPPLIGWAAI), 186 to 206 (IAWMLFLIMFIWQIPHFLALA), 251 to 271 (LGITFMVIATLLNIGWIALGL), and 287 to 307 (FVYSLNYLTILFVSMIVVTFF).

This sequence belongs to the UbiA prenyltransferase family. Protoheme IX farnesyltransferase subfamily. As to quaternary structure, interacts with CtaA.

Its subcellular location is the cell membrane. It catalyses the reaction heme b + (2E,6E)-farnesyl diphosphate + H2O = Fe(II)-heme o + diphosphate. It participates in porphyrin-containing compound metabolism; heme O biosynthesis; heme O from protoheme: step 1/1. Its function is as follows. Converts heme B (protoheme IX) to heme O by substitution of the vinyl group on carbon 2 of heme B porphyrin ring with a hydroxyethyl farnesyl side group. This Bacillus mycoides (strain KBAB4) (Bacillus weihenstephanensis) protein is Protoheme IX farnesyltransferase.